Here is a 438-residue protein sequence, read N- to C-terminus: UDP-N-acetylmuramoylalanine--D-glutamate ligase (438 aa).

112 to 118 (GSNGKST) contributes to the ATP binding site.

The protein belongs to the MurCDEF family.

The protein localises to the cytoplasm. It carries out the reaction UDP-N-acetyl-alpha-D-muramoyl-L-alanine + D-glutamate + ATP = UDP-N-acetyl-alpha-D-muramoyl-L-alanyl-D-glutamate + ADP + phosphate + H(+). Its pathway is cell wall biogenesis; peptidoglycan biosynthesis. Its function is as follows. Cell wall formation. Catalyzes the addition of glutamate to the nucleotide precursor UDP-N-acetylmuramoyl-L-alanine (UMA). This chain is UDP-N-acetylmuramoylalanine--D-glutamate ligase, found in Shigella sonnei (strain Ss046).